Reading from the N-terminus, the 126-residue chain is Glycine--tRNA ligase beta subunit (126 aa).

The protein belongs to the class-II aminoacyl-tRNA synthetase family. As to quaternary structure, tetramer of two alpha and two beta subunits.

The protein resides in the cytoplasm. It carries out the reaction tRNA(Gly) + glycine + ATP = glycyl-tRNA(Gly) + AMP + diphosphate. The sequence is that of Glycine--tRNA ligase beta subunit (glyS) from Neisseria gonorrhoeae.